The chain runs to 406 residues: Putative gustatory receptor 59f (406 aa).

Residues 1 to 36 (MRSSATKGAKLKNSPRERLSSFNPQYAERYKELYRT) lie on the Cytoplasmic side of the membrane. The chain crosses the membrane as a helical span at residues 37–57 (LFWLLLISVLANTAPITILPG). The Extracellular segment spans residues 58–69 (CPNRFYRLVHLS). A helical transmembrane segment spans residues 70-90 (WMILWYGLFVLGSYWEFVLVT). The Cytoplasmic portion of the chain corresponds to 91-99 (TQRVSLDRY). A helical transmembrane segment spans residues 100-120 (LNAIESAIYVVHIFSIMLLTW). Over 121–154 (QCRNWAPKLMTNIVTSDLNRAYTIDCNRTKRFIR) the chain is Extracellular. An N-linked (GlcNAc...) asparagine glycan is attached at N147. Residues 155-175 (LQLFLVGIFACLAIFFNIWTH) traverse the membrane as a helical segment. At 176-189 (KFVVYRSILSINSY) the chain is on the cytoplasmic side. Residues 190–210 (VMPNIISSISFAQYYLLLQGI) form a helical membrane-spanning segment. The Extracellular segment spans residues 211-259 (AWRQRRLTEGLERELTHLHSPRISEVQKIRMHHANLIDFTKAVNRTFQY). A glycan (N-linked (GlcNAc...) asparagine) is linked at N254. A helical transmembrane segment spans residues 260–280 (SILLLFVGCFLNFNLVLFLVY). The Cytoplasmic portion of the chain corresponds to 281–364 (QGIENPSMAD…RQHVVCGVIN (84 aa)). A helical membrane pass occupies residues 365-385 (LDLKFLTTLLVASADFFIFLL). Residues 386–406 (QYDVTYEALSKSVQGNVTRYK) lie on the Extracellular side of the membrane. N401 carries N-linked (GlcNAc...) asparagine glycosylation.

This sequence belongs to the insect chemoreceptor superfamily. Gustatory receptor (GR) family. Gr10a subfamily. In terms of tissue distribution, expressed in the adult abdomen and wing. In larvae, is expressed in neurons of the terminal external chemosensory organ.

It is found in the cell membrane. Functionally, probable gustatory receptor which mediates acceptance or avoidance behavior, depending on its substrates. In Drosophila melanogaster (Fruit fly), this protein is Putative gustatory receptor 59f (Gr59f).